The chain runs to 271 residues: Putative phosphoenolpyruvate synthase regulatory protein (271 aa).

An ADP-binding site is contributed by 151–158 (GVSRSGKT).

This sequence belongs to the pyruvate, phosphate/water dikinase regulatory protein family. PSRP subfamily.

It catalyses the reaction [pyruvate, water dikinase] + ADP = [pyruvate, water dikinase]-phosphate + AMP + H(+). It carries out the reaction [pyruvate, water dikinase]-phosphate + phosphate + H(+) = [pyruvate, water dikinase] + diphosphate. Its function is as follows. Bifunctional serine/threonine kinase and phosphorylase involved in the regulation of the phosphoenolpyruvate synthase (PEPS) by catalyzing its phosphorylation/dephosphorylation. The protein is Putative phosphoenolpyruvate synthase regulatory protein of Paraburkholderia phytofirmans (strain DSM 17436 / LMG 22146 / PsJN) (Burkholderia phytofirmans).